The primary structure comprises 1052 residues: Swarming motility protein SwrC (1052 aa).

This sequence belongs to the resistance-nodulation-cell division (RND) (TC 2.A.6) family.

Its function is as follows. Required for self-resistance to surfactin, an antimicrobial lipopeptide surfactant produced by B.subtilis. Also required for swarming motility. The chain is Swarming motility protein SwrC (swrC) from Bacillus subtilis (strain 168).